Here is a 147-residue protein sequence, read N- to C-terminus: SsrA-binding protein (147 aa).

The protein belongs to the SmpB family.

It is found in the cytoplasm. Required for rescue of stalled ribosomes mediated by trans-translation. Binds to transfer-messenger RNA (tmRNA), required for stable association of tmRNA with ribosomes. tmRNA and SmpB together mimic tRNA shape, replacing the anticodon stem-loop with SmpB. tmRNA is encoded by the ssrA gene; the 2 termini fold to resemble tRNA(Ala) and it encodes a 'tag peptide', a short internal open reading frame. During trans-translation Ala-aminoacylated tmRNA acts like a tRNA, entering the A-site of stalled ribosomes, displacing the stalled mRNA. The ribosome then switches to translate the ORF on the tmRNA; the nascent peptide is terminated with the 'tag peptide' encoded by the tmRNA and targeted for degradation. The ribosome is freed to recommence translation, which seems to be the essential function of trans-translation. The protein is SsrA-binding protein of Mycoplasma pneumoniae (strain ATCC 29342 / M129 / Subtype 1) (Mycoplasmoides pneumoniae).